The chain runs to 57 residues: Small ribosomal subunit protein eS31 (57 aa).

Zn(2+) contacts are provided by cysteine 29, cysteine 32, cysteine 47, and cysteine 50. The C4-type zinc-finger motif lies at 29–50; the sequence is CPRCGPGVFMANHKDRWSCGRC.

This sequence belongs to the eukaryotic ribosomal protein eS31 family. In terms of assembly, part of the 30S ribosomal subunit. The cofactor is Zn(2+).

The chain is Small ribosomal subunit protein eS31 from Thermococcus kodakarensis (strain ATCC BAA-918 / JCM 12380 / KOD1) (Pyrococcus kodakaraensis (strain KOD1)).